The sequence spans 404 residues: uncharacterized protein (404 aa).

This sequence belongs to the lymphocryptovirus BTRF1 family.

This is an uncharacterized protein from Homo sapiens (Human).